A 180-amino-acid polypeptide reads, in one-letter code: NADH-quinone oxidoreductase subunit I (180 aa).

2 consecutive 4Fe-4S ferredoxin-type domains span residues 50–80 (LTRD…LQKA) and 90–119 (EFFR…LTPD). Residues Cys-60, Cys-63, Cys-66, Cys-70, Cys-99, Cys-102, Cys-105, and Cys-109 each coordinate [4Fe-4S] cluster.

This sequence belongs to the complex I 23 kDa subunit family. In terms of assembly, NDH-1 is composed of 13 different subunits. Subunits NuoA, H, J, K, L, M, N constitute the membrane sector of the complex. Requires [4Fe-4S] cluster as cofactor.

Its subcellular location is the cell inner membrane. The enzyme catalyses a quinone + NADH + 5 H(+)(in) = a quinol + NAD(+) + 4 H(+)(out). NDH-1 shuttles electrons from NADH, via FMN and iron-sulfur (Fe-S) centers, to quinones in the respiratory chain. The immediate electron acceptor for the enzyme in this species is believed to be ubiquinone. Couples the redox reaction to proton translocation (for every two electrons transferred, four hydrogen ions are translocated across the cytoplasmic membrane), and thus conserves the redox energy in a proton gradient. This Pectobacterium atrosepticum (strain SCRI 1043 / ATCC BAA-672) (Erwinia carotovora subsp. atroseptica) protein is NADH-quinone oxidoreductase subunit I.